The following is a 177-amino-acid chain: 2''-aminoglycoside nucleotidyltransferase (177 aa).

The segment at 1–92 (MDTTQVTLIH…ELLDCEPAWW (92 aa)) is N-terminal domain. Mg(2+)-binding residues include D44, D46, and D86. The Proton acceptor role is filled by D86. The C-terminal domain stretch occupies residues 93–177 (ADEAYEIAEA…RAAFRSRYAA (85 aa)). A100 is a kanamycin A binding site.

Monomer. The cofactor is Mg(2+).

The enzyme catalyses nucleoside triphosphate + gentamicin = diphosphate + 2''-nucleotidylgentamicin.. In terms of biological role, mediates bacterial resistance to kanamycin, gentamicin, dibekacin, sisomicin and tobramycin by adenylating the 2''-hydroxyl group of these antibiotics. In Klebsiella pneumoniae, this protein is 2''-aminoglycoside nucleotidyltransferase.